The primary structure comprises 328 residues: Putative gluconeogenesis factor (328 aa).

It belongs to the gluconeogenesis factor family.

Its subcellular location is the cytoplasm. In terms of biological role, required for morphogenesis under gluconeogenic growth conditions. In Aquifex aeolicus (strain VF5), this protein is Putative gluconeogenesis factor.